Here is an 87-residue protein sequence, read N- to C-terminus: MAHKKGQGSVKNGRDSRSKRLGVKKFGGQEVIAGNIIIRQRGTKWHPGKGVGMGRDYTIFSLVDGRVFFDREGRRVNVAPEGSEAAN.

Residues 1–22 form a disordered region; sequence MAHKKGQGSVKNGRDSRSKRLG.

Belongs to the bacterial ribosomal protein bL27 family.

The protein is Large ribosomal subunit protein bL27 of Akkermansia muciniphila (strain ATCC BAA-835 / DSM 22959 / JCM 33894 / BCRC 81048 / CCUG 64013 / CIP 107961 / Muc).